Consider the following 668-residue polypeptide: UvrABC system protein B (668 aa).

The Helicase ATP-binding domain maps to asparagine 25–glutamate 170. Glycine 38–threonine 45 is an ATP binding site. The Beta-hairpin signature appears at tyrosine 91–isoleucine 114. The Helicase C-terminal domain occupies glutamine 429–leucine 595. Residues lysine 622–lysine 657 form the UVR domain.

The protein belongs to the UvrB family. Forms a heterotetramer with UvrA during the search for lesions. Interacts with UvrC in an incision complex.

It localises to the cytoplasm. Functionally, the UvrABC repair system catalyzes the recognition and processing of DNA lesions. A damage recognition complex composed of 2 UvrA and 2 UvrB subunits scans DNA for abnormalities. Upon binding of the UvrA(2)B(2) complex to a putative damaged site, the DNA wraps around one UvrB monomer. DNA wrap is dependent on ATP binding by UvrB and probably causes local melting of the DNA helix, facilitating insertion of UvrB beta-hairpin between the DNA strands. Then UvrB probes one DNA strand for the presence of a lesion. If a lesion is found the UvrA subunits dissociate and the UvrB-DNA preincision complex is formed. This complex is subsequently bound by UvrC and the second UvrB is released. If no lesion is found, the DNA wraps around the other UvrB subunit that will check the other stand for damage. The protein is UvrABC system protein B of Borreliella burgdorferi (strain ZS7) (Borrelia burgdorferi).